Here is a 273-residue protein sequence, read N- to C-terminus: Putative phosphoenolpyruvate synthase regulatory protein (273 aa).

153–160 provides a ligand contact to ADP; sequence GVSRSGKT.

Belongs to the pyruvate, phosphate/water dikinase regulatory protein family. PSRP subfamily.

The catalysed reaction is [pyruvate, water dikinase] + ADP = [pyruvate, water dikinase]-phosphate + AMP + H(+). It catalyses the reaction [pyruvate, water dikinase]-phosphate + phosphate + H(+) = [pyruvate, water dikinase] + diphosphate. Its function is as follows. Bifunctional serine/threonine kinase and phosphorylase involved in the regulation of the phosphoenolpyruvate synthase (PEPS) by catalyzing its phosphorylation/dephosphorylation. In Paracidovorax citrulli (strain AAC00-1) (Acidovorax citrulli), this protein is Putative phosphoenolpyruvate synthase regulatory protein.